Here is a 678-residue protein sequence, read N- to C-terminus: DNA ligase (678 aa).

NAD(+) is bound by residues 32–36 (DSEYD), 81–82 (SL), and Glu-113. Lys-115 serves as the catalytic N6-AMP-lysine intermediate. Residues Arg-136, Glu-174, Lys-291, and Lys-315 each coordinate NAD(+). The Zn(2+) site is built by Cys-409, Cys-412, Cys-427, and Cys-433. Residues 596-678 (ASDNPFAGKT…MRLLGESSDA (83 aa)) enclose the BRCT domain.

It belongs to the NAD-dependent DNA ligase family. LigA subfamily. Requires Mg(2+) as cofactor. It depends on Mn(2+) as a cofactor.

It catalyses the reaction NAD(+) + (deoxyribonucleotide)n-3'-hydroxyl + 5'-phospho-(deoxyribonucleotide)m = (deoxyribonucleotide)n+m + AMP + beta-nicotinamide D-nucleotide.. Its function is as follows. DNA ligase that catalyzes the formation of phosphodiester linkages between 5'-phosphoryl and 3'-hydroxyl groups in double-stranded DNA using NAD as a coenzyme and as the energy source for the reaction. It is essential for DNA replication and repair of damaged DNA. This is DNA ligase from Sodalis glossinidius (strain morsitans).